An 89-amino-acid polypeptide reads, in one-letter code: Small ribosomal subunit protein uS15 (89 aa).

Belongs to the universal ribosomal protein uS15 family. As to quaternary structure, part of the 30S ribosomal subunit. Forms a bridge to the 50S subunit in the 70S ribosome, contacting the 23S rRNA.

Functionally, one of the primary rRNA binding proteins, it binds directly to 16S rRNA where it helps nucleate assembly of the platform of the 30S subunit by binding and bridging several RNA helices of the 16S rRNA. Its function is as follows. Forms an intersubunit bridge (bridge B4) with the 23S rRNA of the 50S subunit in the ribosome. This Streptococcus agalactiae serotype Ia (strain ATCC 27591 / A909 / CDC SS700) protein is Small ribosomal subunit protein uS15.